Here is a 320-residue protein sequence, read N- to C-terminus: uncharacterized protein (320 aa).

A disordered region spans residues 1-40; the sequence is MDHPSTSSLPRKKVKAGVKKAGKKTGKKTTGKKKTTPSAI. Residues 10 to 35 are compositionally biased toward basic residues; that stretch reads PRKKVKAGVKKAGKKTGKKTTGKKKT. Residues 51–71 form a helical membrane-spanning segment; it reads LLVLLAVLSYLAALSLGLYIM. Residues Asn-92, Asn-122, Asn-154, and Asn-167 are each glycosylated (N-linked (GlcNAc...) asparagine). 2 helical membrane-spanning segments follow: residues 186–206 and 216–236; these read PLVHLLLFFVTGIMLFVAMTG and MLVTAIALSAFSLALALVTVL. N-linked (GlcNAc...) asparagine glycosylation occurs at Asn-247. The helical transmembrane segment at 272-292 threads the bilayer; that stretch reads VQGALVAIVAVFYLTMGVVFV.

Its subcellular location is the membrane. It participates in secondary metabolite biosynthesis; terpenoid biosynthesis. In terms of biological role, part of the gene cluster that mediates the biosynthesis of an ophiobolin family sesterterpenoid. This is an uncharacterized protein from Aspergillus terreus.